The following is a 102-amino-acid chain: uncharacterized protein (102 aa).

The next 2 membrane-spanning stretches (helical) occupy residues 38–58 (FYVWSSRIYVLVLVVQAQLIL) and 64–84 (VLFLLLFFLHNFFLLPQLFQF).

The protein localises to the membrane. This is an uncharacterized protein from Saccharomyces cerevisiae (strain ATCC 204508 / S288c) (Baker's yeast).